The sequence spans 438 residues: MQTIYTKITDIKGNLITVEAEGARLGELATITRSDGRSSYASVLRFDLKKVTLQVFGGTSGLSTGDHVTFLGRPMEVTFGSSLLGRRLNGIGKPIDNEGECFGEPIEIATPTFNPVCRIVPRSMVRTNIPMIDVFNCLVKSQKIPIFSSSGEHHNALLMRIAAQTDADIVVIGGMGLTFVDYSFFVEESKKLGFADKCVMFIHKAVDAPVECVLVPDMALACAEKFAVEEKKNVLVLLTDMTAFADALKEISITMDQIPANRGYPGSLYSDLALRYEKAVEIADGGSITLITVTTMPSDDITHPVPDNTGYITEGQFYLRNNRIDPFGSLSRLKQLVIGKVTREDHGDLANALIRLYADSRKATERMAMGFKLSNWDKKLLAFSELFETRLMSLEVNIPLEEALDIGWKILAQSFTSEEVGIKAQLINKYWPKACLSK.

The protein belongs to the ATPase alpha/beta chains family.

Functionally, produces ATP from ADP in the presence of a proton gradient across the membrane. The V-type beta chain is a regulatory subunit. The sequence is that of V-type ATP synthase beta chain (atpB) from Chlamydia pneumoniae (Chlamydophila pneumoniae).